Here is a 105-residue protein sequence, read N- to C-terminus: MTASFKAVMIGGVRWYQQHISANTPPCCKYYPTCSNYAIEALERYGAFKGGVLAVLRLLRCRPWSRGGIDDVPQRYSVFYRFSWSKAHEEPRLTPLATTQREAQR.

The protein belongs to the UPF0161 family.

It localises to the cell membrane. In terms of biological role, could be involved in insertion of integral membrane proteins into the membrane. This is Putative membrane protein insertion efficiency factor from Bifidobacterium longum (strain NCC 2705).